The following is a 460-amino-acid chain: uncharacterized protein (460 aa).

Residues 9–67 enclose the TRAM domain; the sequence is NFKKNDIFEAEVLDLTHEGQGVVKIDSFPFFVDNALPGERIKMHVLKVGKSFGFGRVDE. Positions 292, 321, 342, and 390 each coordinate S-adenosyl-L-methionine. Cys417 acts as the Nucleophile in catalysis.

This sequence belongs to the class I-like SAM-binding methyltransferase superfamily. RNA M5U methyltransferase family.

This is an uncharacterized protein from Lactococcus lactis subsp. lactis (strain IL1403) (Streptococcus lactis).